The chain runs to 593 residues: Proline--tRNA ligase (593 aa).

It belongs to the class-II aminoacyl-tRNA synthetase family. ProS type 1 subfamily. Homodimer.

The protein localises to the cytoplasm. It catalyses the reaction tRNA(Pro) + L-proline + ATP = L-prolyl-tRNA(Pro) + AMP + diphosphate. Functionally, catalyzes the attachment of proline to tRNA(Pro) in a two-step reaction: proline is first activated by ATP to form Pro-AMP and then transferred to the acceptor end of tRNA(Pro). As ProRS can inadvertently accommodate and process non-cognate amino acids such as alanine and cysteine, to avoid such errors it has two additional distinct editing activities against alanine. One activity is designated as 'pretransfer' editing and involves the tRNA(Pro)-independent hydrolysis of activated Ala-AMP. The other activity is designated 'posttransfer' editing and involves deacylation of mischarged Ala-tRNA(Pro). The misacylated Cys-tRNA(Pro) is not edited by ProRS. This chain is Proline--tRNA ligase, found in Parasynechococcus marenigrum (strain WH8102).